The chain runs to 510 residues: Cytochrome P450 11B2, mitochondrial (510 aa).

Residues 1-34 (MGACDNDFIELHSRVTADVWLARPWQCLHRTRAL) constitute a mitochondrion transit peptide. A 21-hydroxyprogesterone-binding site is contributed by phenylalanine 391. A heme-binding site is contributed by cysteine 457.

The protein belongs to the cytochrome P450 family. The cofactor is heme. Adrenal cortex.

It is found in the mitochondrion inner membrane. It catalyses the reaction a steroid + 2 reduced [adrenodoxin] + O2 + 2 H(+) = an 11beta-hydroxysteroid + 2 oxidized [adrenodoxin] + H2O. The catalysed reaction is 21-hydroxyprogesterone + 2 reduced [adrenodoxin] + O2 + 2 H(+) = corticosterone + 2 oxidized [adrenodoxin] + H2O. It carries out the reaction corticosterone + 2 reduced [adrenodoxin] + O2 + 2 H(+) = 18-hydroxycorticosterone + 2 oxidized [adrenodoxin] + H2O. The enzyme catalyses 18-hydroxycorticosterone + 2 reduced [adrenodoxin] + O2 + 2 H(+) = aldosterone + 2 oxidized [adrenodoxin] + 2 H2O. It catalyses the reaction 11-deoxycortisol + 2 reduced [adrenodoxin] + O2 + 2 H(+) = cortisol + 2 oxidized [adrenodoxin] + H2O. The catalysed reaction is cortisol + 2 reduced [adrenodoxin] + O2 + 2 H(+) = 18-hydroxycortisol + 2 oxidized [adrenodoxin] + H2O. It carries out the reaction 21-hydroxyprogesterone + 2 reduced [adrenodoxin] + O2 + 2 H(+) = 18-hydroxy-11-deoxycorticosterone + 2 oxidized [adrenodoxin] + H2O. The enzyme catalyses 18-hydroxycortisol + 2 reduced [adrenodoxin] + O2 + 2 H(+) = 18-oxocortisol + 2 oxidized [adrenodoxin] + 2 H2O. It functions in the pathway steroid biosynthesis. In terms of biological role, a cytochrome P450 monooxygenase that catalyzes the biosynthesis of aldosterone, the main mineralocorticoid responsible for salt and water homeostasis. Catalyzes three sequential oxidative reactions of 11-deoxycorticosterone (21-hydroxyprogesterone), namely 11-beta hydroxylation, followed by two successive oxidations at C18 yielding 18-hydroxy and then 18-oxo intermediates (that do not leave the enzyme active site during the consecutive hydroxylation reactions), and end with the formation of aldosterone. Can also produce 18-hydroxycortisol and 18-oxocortisol, derived from successive oxidations of cortisol at C18, normally found at very low levels, but significantly increased in primary aldosteronism, the most common form of secondary hypertension. Mechanistically, uses molecular oxygen inserting one oxygen atom into a substrate and reducing the second into a water molecule. Two electrons are provided by NADPH via a two-protein mitochondrial transfer system comprising flavoprotein FDXR (adrenodoxin/ferredoxin reductase) and nonheme iron-sulfur protein FDX1 or FDX2 (adrenodoxin/ferredoxin). Could also be involved in the androgen metabolic pathway. In Rattus norvegicus (Rat), this protein is Cytochrome P450 11B2, mitochondrial (Cyp11b2).